Here is a 337-residue protein sequence, read N- to C-terminus: UDP-N-acetylenolpyruvoylglucosamine reductase (337 aa).

Positions 16–187 constitute an FAD-binding PCMH-type domain; sequence ALPGRAARYQ…TSVIFRLAKA (172 aa). Arg-160 is a catalytic residue. Ser-237 (proton donor) is an active-site residue. Glu-333 is a catalytic residue.

Requires FAD as cofactor.

The protein resides in the cytoplasm. The enzyme catalyses UDP-N-acetyl-alpha-D-muramate + NADP(+) = UDP-N-acetyl-3-O-(1-carboxyvinyl)-alpha-D-glucosamine + NADPH + H(+). The protein operates within cell wall biogenesis; peptidoglycan biosynthesis. Cell wall formation. This is UDP-N-acetylenolpyruvoylglucosamine reductase from Dechloromonas aromatica (strain RCB).